Here is a 360-residue protein sequence, read N- to C-terminus: Protein Wnt-2 (360 aa).

Residues 1–25 (MNAPVGGIWLWLPLLLTWLSPEVSS) form the signal peptide. Intrachain disulfides connect Cys-76-Cys-87, Cys-127-Cys-135, Cys-137-Cys-157, Cys-206-Cys-220, Cys-208-Cys-215, Cys-278-Cys-309, Cys-294-Cys-304, Cys-308-Cys-348, Cys-324-Cys-339, Cys-326-Cys-336, and Cys-331-Cys-332. Ser-212 carries O-palmitoleoyl serine; by PORCN lipidation. A glycan (N-linked (GlcNAc...) asparagine) is linked at Asn-295.

Belongs to the Wnt family. In terms of processing, palmitoleoylation is required for efficient binding to frizzled receptors. Depalmitoleoylation leads to Wnt signaling pathway inhibition.

It localises to the secreted. Its subcellular location is the extracellular space. It is found in the extracellular matrix. Its function is as follows. Ligand for members of the frizzled family of seven transmembrane receptors. Probable developmental protein. May be a signaling molecule which affects the development of discrete regions of tissues. Is likely to signal over only few cell diameters. The sequence is that of Protein Wnt-2 (WNT2) from Rhinolophus ferrumequinum (Greater horseshoe bat).